The primary structure comprises 272 residues: Zinc transporter ZupT (272 aa).

A run of 8 helical transmembrane segments spans residues 12–32 (ALAV…MVVF), 40–60 (LLAF…LSEI), 76–96 (LGFT…MVID), 126–146 (LLTA…TFFA), 158–178 (AFAI…PVYF), 187–207 (FGAS…GYLL), 211–231 (VLSE…MVFL), and 247–267 (HETV…LVLF). Fe(2+)-binding residues include asparagine 136 and glutamate 139. Residues glutamate 139 and histidine 164 each coordinate Zn(2+). Asparagine 165, glutamate 168, and glutamate 197 together coordinate Fe(2+). Glutamate 168 is a Zn(2+) binding site.

The protein belongs to the ZIP transporter (TC 2.A.5) family. ZupT subfamily.

The protein localises to the cell inner membrane. The catalysed reaction is Zn(2+)(in) = Zn(2+)(out). Its function is as follows. Mediates zinc uptake. May also transport other divalent cations. The chain is Zinc transporter ZupT from Xanthomonas campestris pv. campestris (strain ATCC 33913 / DSM 3586 / NCPPB 528 / LMG 568 / P 25).